A 635-amino-acid chain; its full sequence is MQLLLIHSDYIEYEVKKSTPVAEEIEESFKQGRLEDALTAFMAVESFDEANPQEIIDRAVSEIENVAGQVKAENIMLYPYAHLSSDLSSPKVAVSVLKGIENALEGKYNVMRAPFGWYKAFRISCKGHPLSELSRTIRLEGAVPCGKVVSLDAEKKEVVSEALKAEDSAKSYWRILTPDGELHDAETFDLTGHDNLQKFVDYEISKNRNIEKAPPHVELMRRLEIADYEPGSDSGNMRYYPKGRLMKSLIENFVLEESSKIGAMEVETPLMYDMNHPTLKKYLDRFPARQYSIESDKRHMFLRFAACFGQFLMNHDMTISYKNLPLKMIEMTRYSFRKEQRGELVGLRRLRAFTMPDMHTLCPDMEAAISQFGEQYSMCIDILRKIGIDVSDFEVAIRFTREFYDDNREFITELAKKVDKPVLVEMWDTRFFYFVLKFEFNFVDAIAKASALSTVQIDVENAERYDINYVDANGKINRPTILHCSPSGAIERCIYALLEKAAMDAEEGKVPNLPVWLSPTQVRVIPIAERHMDFAQEVADSLLCRADIDDREETVGKKIRDAGREWIPYVAVIGDSEVESGKVTVTIRAESEPKKPMKVEMTAEELSERVFNEIGDMPYRSLPLAKLLSMRPKFI.

The editing domain stretch occupies residues 1–144 (MQLLLIHSDY…RTIRLEGAVP (144 aa)). Positions 215 to 514 (PHVELMRRLE…AEEGKVPNLP (300 aa)) are catalytic. 3 residues coordinate Zn(2+): Cys-307, His-359, and His-483.

This sequence belongs to the class-II aminoacyl-tRNA synthetase family. As to quaternary structure, homodimer. The cofactor is Zn(2+).

The protein localises to the cytoplasm. It catalyses the reaction tRNA(Thr) + L-threonine + ATP = L-threonyl-tRNA(Thr) + AMP + diphosphate + H(+). In terms of biological role, catalyzes the attachment of threonine to tRNA(Thr) in a two-step reaction: L-threonine is first activated by ATP to form Thr-AMP and then transferred to the acceptor end of tRNA(Thr). Also edits incorrectly charged L-seryl-tRNA(Thr). The chain is Threonine--tRNA ligase from Methanococcoides burtonii (strain DSM 6242 / NBRC 107633 / OCM 468 / ACE-M).